An 82-amino-acid polypeptide reads, in one-letter code: Capsid protein G8P (82 aa).

An N-terminal signal peptide occupies residues 1-28 (MKAMKQRIAKFSPVASFRNLCIAGSVTA). At 29 to 57 (ATSLPAFAGVIDTSAVESAITDGQGDMKA) the chain is on the periplasmic side. A helical membrane pass occupies residues 58–78 (IGGYIVGALVILAVAGLIYSM). At 79–82 (LRKA) the chain is on the cytoplasmic side.

Belongs to the inovirus capsid protein family. As to quaternary structure, homomultimerizes. There are several thousands of this protein in the phage capsid.

The protein resides in the virion. It localises to the host membrane. Self assembles to form a helical capsid wrapping up the viral genomic DNA. The capsid displays a filamentous structure with a length of 760-1950 nm and a width of 6-8 nm. The virion assembly and budding take place at the host inner membrane. The chain is Capsid protein G8P (VIII) from Pseudomonas phage Pf1 (Bacteriophage Pf1).